A 934-amino-acid polypeptide reads, in one-letter code: Protocadherin gamma-C3 (934 aa).

Positions 1–31 (MVPEAWRSGLVSTGRVVGVLLLLGALNKAST) are cleaved as a signal peptide. Cadherin domains lie at 32–135 (VIHY…NPAF), 136–244 (PTQE…APVF), 245–352 (NQSL…APEI), 353–457 (TVTS…PPQS), 458–567 (SQSS…APQV), and 572–685 (PGGS…APRE). Over 32 to 693 (VIHYEIPEER…REQNKNLTFY (662 aa)) the chain is Extracellular. N-linked (GlcNAc...) asparagine glycans are attached at residues Asn245, Asn424, Asn478, Asn550, Asn615, and Asn689. A helical transmembrane segment spans residues 694-714 (LLLSLILVSVGFVVTVFGVII). Residues 715–934 (FKVYKWKQSR…KKKSGKKEKK (220 aa)) are Cytoplasmic-facing. Disordered stretches follow at residues 804-843 (ESAP…WPNN) and 904-934 (ATLT…KEKK). The span at 812 to 843 (APPNTDWRFSQAQRPGTSGSQNGDDTGTWPNN) shows a compositional bias: polar residues. Over residues 924–934 (NKKKSGKKEKK) the composition is skewed to basic residues.

Its subcellular location is the cell membrane. Potential calcium-dependent cell-adhesion protein. May be involved in the establishment and maintenance of specific neuronal connections in the brain. The protein is Protocadherin gamma-C3 (PCDHGC3) of Pan troglodytes (Chimpanzee).